The following is a 491-amino-acid chain: NADH-quinone oxidoreductase subunit N (491 aa).

14 consecutive transmembrane segments (helical) span residues 6-26 (TLAP…INWI), 37-57 (VAYP…GMNA), 69-89 (LVVI…GLFV), 103-123 (MFAG…IVMI), 128-148 (FLTL…LVAL), 163-183 (FVLG…MYGA), 206-226 (LAFG…AAPF), 238-258 (PTAV…ALFI), 273-293 (QMML…TAIV), 301-321 (LAYS…SGVV), 335-355 (AMFY…IILL), 379-399 (FAFL…TVGF), 413-433 (GMTW…FYYL), and 458-478 (SMLS…AALM).

This sequence belongs to the complex I subunit 2 family. As to quaternary structure, NDH-1 is composed of 14 different subunits. Subunits NuoA, H, J, K, L, M, N constitute the membrane sector of the complex.

It localises to the cell inner membrane. The catalysed reaction is a quinone + NADH + 5 H(+)(in) = a quinol + NAD(+) + 4 H(+)(out). In terms of biological role, NDH-1 shuttles electrons from NADH, via FMN and iron-sulfur (Fe-S) centers, to quinones in the respiratory chain. The immediate electron acceptor for the enzyme in this species is believed to be ubiquinone. Couples the redox reaction to proton translocation (for every two electrons transferred, four hydrogen ions are translocated across the cytoplasmic membrane), and thus conserves the redox energy in a proton gradient. The protein is NADH-quinone oxidoreductase subunit N of Cupriavidus taiwanensis (strain DSM 17343 / BCRC 17206 / CCUG 44338 / CIP 107171 / LMG 19424 / R1) (Ralstonia taiwanensis (strain LMG 19424)).